The following is a 346-amino-acid chain: Protein Rae1 (346 aa).

WD repeat units follow at residues 17–61, 64–105, 126–148, and 255–289; these read ASPP…ATVP, MKTM…VMQV, LMTG…PMMT, and VNDI…KLKS.

Belongs to the WD repeat rae1 family. In terms of assembly, interacts with hiw; the interaction with Rae1 may protect hiw from autophagy-mediated degradation. Interacts with Nup98-96. Head (at protein level).

It localises to the cytoplasm. The protein localises to the perinuclear region. The protein resides in the nucleus. It is found in the nucleus envelope. Its subcellular location is the chromosome. Functionally, probable component of the nuclear pore complex (NPC) which regulates the nuclear export of specific mRNAs and promotes cell cycle progression during mitosis and male meiosis. Acts with Nup98-96 to promote the nuclear export of specific mRNAs such as Moe, however it does not appear to be required for general nuclear mRNA transport. Essential mitotic and male meiotic cell cycle regulator with roles in many aspects of the cell cycle including chromatin organization and condensation, spindle assembly, chromosome segregation, and maintaining nuclear structure. During male meiosis it is required for completion of meiosis I, as well as accurate cytokinesis of the secondary spermatocytes, and postmeiotic differentiation of spermatids. Acts as a downstream regulatory target of the Hippo/SWH (Sav/Wts/Hpo) signaling pathway to promote mitotic cell cycle progression and proliferation during wing and eye development, and thereby plays a key role in integrating the regulation of proliferation with organ size control. When the Hippo/SWH signaling pathway is inactive, Rae1 acts independently of yki to increase organ size by promoting mitotic S-phase entry and increase cellular proliferation. When the Hippo/SWH signaling pathway is active it inhibits the activity of Rae1 in a Wts-dependent manner to restrict organ growth. However, Rae1 is also able to negatively regulate the levels and activity of yki likely by activating the core kinases of the Hippo/SWH signaling pathway hpo and Wts and increasing the protein levels of hpo, Mer and Wts; it is therefore likely that it functions as part of a negative feedback loop with the Hippo/SWH signaling pathway to regulate pathway homeostasis and prevent organ overgrowth. Promotes mitotic cell cycle progression, at least in part, by increasing the accumulation of mitotic cyclins such as CycB, possibly by directly up-regulating cyclin transcripts or by inhibiting the anaphase promoting complex/cyclosome (APC/C) activator fzy. Also required in presynaptic, postmitotic motor neurons to restrain synaptic terminal growth. Promotes the expression and stability of the an E3 ubiquitin ligase of hiw, and is likely to function in the regulation of synaptic growth by binding to hiw and protecting it from autophagy-mediated degradation. This Drosophila melanogaster (Fruit fly) protein is Protein Rae1.